The chain runs to 471 residues: 5-hydroxytryptamine receptor 2A (471 aa).

The Extracellular portion of the chain corresponds to 1–80 (MDILCEENTS…LQEKNWSALL (80 aa)). N-linked (GlcNAc...) asparagine glycosylation is present at asparagine 38. The helical transmembrane segment at 81-97 (TAVVIILTIAGNILVIM) threads the bilayer. Topologically, residues 98-111 (AVSLEKKLQNATNY) are cytoplasmic. The helical transmembrane segment at 112 to 137 (FLMSLAIADMLLGFLVMPVSMLTILY) threads the bilayer. Residues 138 to 146 (GYRWPLPSK) lie on the Extracellular side of the membrane. The helical transmembrane segment at 147-171 (LCAVWIYLDVLFSTASIMHLCAISL) threads the bilayer. Residues cysteine 148 and cysteine 227 are joined by a disulfide bond. Aspartate 155 lines the serotonin pocket. Residues 172–174 (DRY) carry the DRY motif; important for ligand-induced conformation changes motif. The Cytoplasmic portion of the chain corresponds to 172-191 (DRYVAIQNPIHHSRFNSRTK). Residues 192 to 215 (AFLKIIAVWTISVGISMPIPVFGL) form a helical membrane-spanning segment. The Extracellular portion of the chain corresponds to 216–232 (QDDSKVFKEGSCLLADD). The helical transmembrane segment at 233-258 (NFVLIGSFVSFFIPLTIMVITYFLTI) threads the bilayer. Over 259-322 (KSLQKEATLC…QSISNEQKAC (64 aa)) the chain is Cytoplasmic. Serine 280 bears the Phosphoserine mark. A helical membrane pass occupies residues 323 to 348 (KVLGIVFSLFVVMWCPFFITNIMAVI). Position 343 (asparagine 343) interacts with serotonin. The cysteines at positions 349 and 353 are disulfide-linked. At 349–356 (CKESCNED) the chain is on the extracellular side. A helical membrane pass occupies residues 357–382 (VIGALLNVFVWIGYLSSAVNPLVYTL). An NPxxY motif; important for ligand-induced conformation changes and signaling motif is present at residues 376–380 (NPLVY). Residues 383–471 (FNKTYRSAFS…DGVNEKVSCV (89 aa)) are Cytoplasmic-facing. The interval 450–471 (KQHSEDASKDNSDGVNEKVSCV) is disordered. The segment covering 451 to 465 (QHSEDASKDNSDGVN) has biased composition (basic and acidic residues). Positions 469–471 (SCV) match the PDZ-binding motif.

It belongs to the G-protein coupled receptor 1 family. In terms of assembly, interacts (via C-terminus) with MPDZ and PATJ. May interact (via C-terminus) with MPP3, PRDX6, DLG4, DLG1, CASK, APBA1 and MAGI2. Interacts with GRM2 and DRD2; this may affect signaling.

The protein localises to the cell membrane. It is found in the cell projection. It localises to the dendrite. The protein resides in the axon. Its subcellular location is the cytoplasmic vesicle. The protein localises to the membrane. It is found in the caveola. It localises to the presynapse. Its activity is regulated as follows. G-protein coupled receptor activity is regulated by lipids: oleamide increases HTR2A-mediated activity. In terms of biological role, G-protein coupled receptor for 5-hydroxytryptamine (serotonin). Also functions as a receptor for various drugs and psychoactive substances, including mescaline, psilocybin, 1-(2,5-dimethoxy-4-iodophenyl)-2-aminopropane (DOI) and lysergic acid diethylamide (LSD). Ligand binding causes a conformation change that triggers signaling via guanine nucleotide-binding proteins (G proteins) and modulates the activity of downstream effectors. HTR2A is coupled to G(q)/G(11) G alpha proteins and activates phospholipase C-beta, releasing diacylglycerol (DAG) and inositol 1,4,5-trisphosphate (IP3) second messengers that modulate the activity of phosphatidylinositol 3-kinase and promote the release of Ca(2+) ions from intracellular stores, respectively. Beta-arrestin family members inhibit signaling via G proteins and mediate activation of alternative signaling pathways. Affects neural activity, perception, cognition and mood. Plays a role in the regulation of behavior, including responses to anxiogenic situations and psychoactive substances. Plays a role in intestinal smooth muscle contraction, and may play a role in arterial vasoconstriction. The sequence is that of 5-hydroxytryptamine receptor 2A (HTR2A) from Pongo pygmaeus (Bornean orangutan).